The primary structure comprises 141 residues: Nucleoside diphosphate kinase (141 aa).

ATP contacts are provided by Lys-11, Phe-59, Arg-87, Thr-93, Arg-104, and Asn-114. His-117 functions as the Pros-phosphohistidine intermediate in the catalytic mechanism.

The protein belongs to the NDK family. Homotetramer. The cofactor is Mg(2+).

Its subcellular location is the cytoplasm. It catalyses the reaction a 2'-deoxyribonucleoside 5'-diphosphate + ATP = a 2'-deoxyribonucleoside 5'-triphosphate + ADP. The catalysed reaction is a ribonucleoside 5'-diphosphate + ATP = a ribonucleoside 5'-triphosphate + ADP. Major role in the synthesis of nucleoside triphosphates other than ATP. The ATP gamma phosphate is transferred to the NDP beta phosphate via a ping-pong mechanism, using a phosphorylated active-site intermediate. This is Nucleoside diphosphate kinase from Acidithiobacillus ferrooxidans (strain ATCC 53993 / BNL-5-31) (Leptospirillum ferrooxidans (ATCC 53993)).